Reading from the N-terminus, the 982-residue chain is E3 ubiquitin-protein ligase CBL-B (982 aa).

A compositionally biased stretch (low complexity) spans 1–14; it reads MASSSSSSSSTNSS. The disordered stretch occupies residues 1–25; it reads MASSSSSSSSTNSSAVTGRLPGARS. The segment at 46–178 is 4H; the sequence is PPKQAAADRR…KAIFPSGQFQ (133 aa). Residues 46 to 354 form the Cbl-PTB domain; the sequence is PPKQAAADRR…GRSYNPDLTD (309 aa). The segment at 179–251 is EF-hand-like; sequence GDNFRITKAD…FEFDIFTRLF (73 aa). 5 residues coordinate Ca(2+): Asp-232, Thr-234, Asn-236, Tyr-238, and Glu-243. Positions 252–354 are SH2-like; that stretch reads QPWTSILRNW…GRSYNPDLTD (103 aa). Arg-297 is a binding site for 4-O-phospho-L-tyrosine. The tract at residues 355–383 is linker; it reads LCEPTPHDHIKVTQEQYELYCEMGSTFQL. An RING-type zinc finger spans residues 384–423; it reads CKICAENDKDVKIEPCGHLMCTSCLTSWQESDGQGCPFCR. Disordered stretches follow at residues 480–582, 709–728, and 766–911; these read MNER…RTCR, VRNS…SHPV, and LKQP…PVPR. A compositionally biased stretch (polar residues) spans 483–497; it reads RQNSPVTSPGSSPLS. Positions 554–576 are enriched in pro residues; that stretch reads LPAPPPPLREPPPPPERPPPIPP. The segment covering 825–834 has biased composition (pro residues); the sequence is PSQPPPPPPA. The 44-residue stretch at 927 to 970 folds into the UBA domain; sequence SLAENVDAKIAKLMGEGFPFEEVKRALEIAQNNVDVARSILREF.

As to quaternary structure, interacts with several SH3 domain-containing proteins and with poly-ubiquitinated proteins.

It localises to the cytoplasm. The catalysed reaction is S-ubiquitinyl-[E2 ubiquitin-conjugating enzyme]-L-cysteine + [acceptor protein]-L-lysine = [E2 ubiquitin-conjugating enzyme]-L-cysteine + N(6)-ubiquitinyl-[acceptor protein]-L-lysine.. It participates in protein modification; protein ubiquitination. Its function is as follows. E3 ubiquitin-protein ligase which accepts ubiquitin from specific E2 ubiquitin-conjugating enzymes, and transfers it to substrates, generally promoting their degradation by the proteasome. This Xenopus tropicalis (Western clawed frog) protein is E3 ubiquitin-protein ligase CBL-B (cblb).